A 547-amino-acid chain; its full sequence is Chaperonin GroEL (547 aa).

Residues T30 to P33, K51, D87 to T91, G415, N479 to A481, and D495 each bind ATP.

Belongs to the chaperonin (HSP60) family. Forms a cylinder of 14 subunits composed of two heptameric rings stacked back-to-back. Interacts with the co-chaperonin GroES.

It localises to the cytoplasm. The catalysed reaction is ATP + H2O + a folded polypeptide = ADP + phosphate + an unfolded polypeptide.. In terms of biological role, together with its co-chaperonin GroES, plays an essential role in assisting protein folding. The GroEL-GroES system forms a nano-cage that allows encapsulation of the non-native substrate proteins and provides a physical environment optimized to promote and accelerate protein folding. The polypeptide is Chaperonin GroEL (Pseudomonas putida (strain GB-1)).